Consider the following 336-residue polypeptide: 4-hydroxy-3-methylbut-2-enyl diphosphate reductase (336 aa).

Cys-21 provides a ligand contact to [4Fe-4S] cluster. The (2E)-4-hydroxy-3-methylbut-2-enyl diphosphate site is built by His-50 and His-86. Dimethylallyl diphosphate is bound by residues His-50 and His-86. Isopentenyl diphosphate-binding residues include His-50 and His-86. Residue Cys-108 participates in [4Fe-4S] cluster binding. His-136 is a (2E)-4-hydroxy-3-methylbut-2-enyl diphosphate binding site. Position 136 (His-136) interacts with dimethylallyl diphosphate. Isopentenyl diphosphate is bound at residue His-136. The active-site Proton donor is Glu-138. Thr-177 is a binding site for (2E)-4-hydroxy-3-methylbut-2-enyl diphosphate. Cys-207 serves as a coordination point for [4Fe-4S] cluster. (2E)-4-hydroxy-3-methylbut-2-enyl diphosphate-binding residues include Ser-235, Ser-236, Asn-237, and Ser-280. Dimethylallyl diphosphate is bound by residues Ser-235, Ser-236, Asn-237, and Ser-280. The isopentenyl diphosphate site is built by Ser-235, Ser-236, Asn-237, and Ser-280.

The protein belongs to the IspH family. The cofactor is [4Fe-4S] cluster.

It catalyses the reaction isopentenyl diphosphate + 2 oxidized [2Fe-2S]-[ferredoxin] + H2O = (2E)-4-hydroxy-3-methylbut-2-enyl diphosphate + 2 reduced [2Fe-2S]-[ferredoxin] + 2 H(+). The catalysed reaction is dimethylallyl diphosphate + 2 oxidized [2Fe-2S]-[ferredoxin] + H2O = (2E)-4-hydroxy-3-methylbut-2-enyl diphosphate + 2 reduced [2Fe-2S]-[ferredoxin] + 2 H(+). Its pathway is isoprenoid biosynthesis; dimethylallyl diphosphate biosynthesis; dimethylallyl diphosphate from (2E)-4-hydroxy-3-methylbutenyl diphosphate: step 1/1. It participates in isoprenoid biosynthesis; isopentenyl diphosphate biosynthesis via DXP pathway; isopentenyl diphosphate from 1-deoxy-D-xylulose 5-phosphate: step 6/6. Functionally, catalyzes the conversion of 1-hydroxy-2-methyl-2-(E)-butenyl 4-diphosphate (HMBPP) into a mixture of isopentenyl diphosphate (IPP) and dimethylallyl diphosphate (DMAPP). Acts in the terminal step of the DOXP/MEP pathway for isoprenoid precursor biosynthesis. The protein is 4-hydroxy-3-methylbut-2-enyl diphosphate reductase of Mesorhizobium japonicum (strain LMG 29417 / CECT 9101 / MAFF 303099) (Mesorhizobium loti (strain MAFF 303099)).